Consider the following 238-residue polypeptide: PCWKGWSEDEQNLWPQRYIQLVVVADHGMFMKYNGDLAAIRKRVHELVNNINGFYRSLNIDVSLTDLEIWSDQDFITVVQSSSAKNTLNSFGEWREADLLRRKSHDHAQLLTAIDLDDDTVGLAYTSSMCNPRKSVAWGQDHSEEPINLLDVGVTMAHELGHNLGMNHDEEKKCHCGASLCIMSPSITEGPSLEFSDDSMGYYQSFLVVVNYNPQCILNKPEDQYYYILSPKHRIYSW.

The Peptidase M12B domain maps to 17-221; that stretch reads RYIQLVVVAD…YNPQCILNKP (205 aa). Aspartate 106 serves as a coordination point for Ca(2+). Disulfide bonds link cysteine 130/cysteine 216 and cysteine 174/cysteine 181. Zn(2+) is bound at residue histidine 158. Residue glutamate 159 is part of the active site. Residues histidine 162 and histidine 168 each contribute to the Zn(2+) site. Ca(2+) contacts are provided by cysteine 216 and asparagine 219.

In terms of assembly, monomer. It depends on Zn(2+) as a cofactor. As to expression, expressed by the venom gland.

It localises to the secreted. Inhibited by EDTA and EGTA. Inhibited by serum and antihemorrhagic factors Da2-I and Da2-II from D.albiventris. Not inhibited by PMSF or SBT-I. Functionally, snake venom zinc metalloprotease that is weakly hemorrhagic and has Aalpha, Bbeta fibrinogenolytic activities. Cleaves the Aalpha chain of fibrinogen first, followed by the Bbeta chain and shows no effect on the gamma chain. Has caseinolytic activity. Induces dose-dependent edema. This is Snake venom metalloproteinase HF-1 from Bothrops marajoensis (Marajo lancehead).